Here is a 96-residue protein sequence, read N- to C-terminus: AVYVVGGSGGWTFNTESWPKGKRFRAGDILLFNYNPXMHNVVVVNQGGFSTCNTPAGAKVYTSGRDQIKLPKGQSYFICNFPGHCQSGMKIAVNAL.

One can recognise a Phytocyanin domain in the interval A1–L96. Residues H39, C79, H84, and M89 each coordinate Cu cation. Residues C52 and C85 are joined by a disulfide bond.

This is Basic blue protein from Cucumis sativus (Cucumber).